The primary structure comprises 89 residues: Large ribosomal subunit protein bL27 (89 aa).

The segment at 1-22 is disordered; the sequence is MAHKKAGGSSRNGRDSAGRRLG.

It belongs to the bacterial ribosomal protein bL27 family.

The chain is Large ribosomal subunit protein bL27 from Dinoroseobacter shibae (strain DSM 16493 / NCIMB 14021 / DFL 12).